Reading from the N-terminus, the 64-residue chain is Large ribosomal subunit protein bL28 (64 aa).

The protein belongs to the bacterial ribosomal protein bL28 family.

The protein is Large ribosomal subunit protein bL28 of Mycoplasmoides gallisepticum (strain R(low / passage 15 / clone 2)) (Mycoplasma gallisepticum).